The primary structure comprises 553 residues: ATP synthase F(1) complex subunit alpha, mitochondrial (553 aa).

The transit peptide at 1-43 directs the protein to the mitochondrion; that stretch reads MLSVRVAAAVARALPRRAGLVSKNALGSSFVAARNLHASNTRL. 2 positions are modified to phosphoserine: S53 and S65. Position 76 is a phosphoserine; alternate (S76). A glycan (O-linked (GlcNAc) serine; alternate) is linked at S76. S106 is modified (phosphoserine). An N6-acetyllysine mark is found at K123, K126, and K132. T134 is subject to Phosphothreonine. K161 bears the N6-acetyllysine; alternate mark. K161 bears the N6-succinyllysine; alternate mark. Residue S166 is modified to Phosphoserine. K167 carries the post-translational modification N6-acetyllysine; alternate. K167 carries the N6-succinyllysine; alternate modification. The residue at position 184 (S184) is a Phosphoserine. The residue at position 204 (R204) is an Omega-N-methylarginine. ATP is bound by residues Q215, G217, K218, T219, and S220. Position 219 (T219) interacts with Mg(2+). K230 and K239 each carry N6-acetyllysine; alternate. Residues K230 and K239 each carry the N6-succinyllysine; alternate modification. K240 bears the N6-acetyllysine mark. K261 and K305 each carry N6-acetyllysine; alternate. N6-succinyllysine; alternate is present on residues K261 and K305. D312 contributes to the Mg(2+) binding site. K427 carries the N6-acetyllysine; alternate modification. K427 is subject to N6-succinyllysine; alternate. Position 434 is an N6-acetyllysine (K434). The ATP site is built by Q473 and Q475. 4 positions are modified to N6-acetyllysine; alternate: K498, K506, K531, and K539. 4 positions are modified to N6-succinyllysine; alternate: K498, K506, K531, and K539. Residue K541 is modified to N6-acetyllysine.

The protein belongs to the ATPase alpha/beta chains family. In terms of assembly, homotrimer. Component of the ATP synthase complex composed at least of ATP5F1A/subunit alpha, ATP5F1B/subunit beta, ATP5MC1/subunit c (homooctomer), MT-ATP6/subunit a, MT-ATP8/subunit 8, ATP5ME/subunit e, ATP5MF/subunit f, ATP5MG/subunit g, ATP5MK/subunit k, ATP5MJ/subunit j, ATP5F1C/subunit gamma, ATP5F1D/subunit delta, ATP5F1E/subunit epsilon, ATP5PF/subunit F6, ATP5PB/subunit b, ATP5PD/subunit d, ATP5PO/subunit OSCP. ATP synthase complex consists of a soluble F(1) head domain (subunits alpha(3) and beta(3)) - the catalytic core - and a membrane F(0) domain - the membrane proton channel (subunits c, a, 8, e, f, g, k and j). These two domains are linked by a central stalk (subunits gamma, delta, and epsilon) rotating inside the F1 region and a stationary peripheral stalk (subunits F6, b, d, and OSCP). Interacts with ATPAF2. Interacts with HRG; the interaction occurs on the surface of T-cells and alters the cell morphology when associated with concanavalin (in vitro). Interacts with PLG (angiostatin peptide); the interaction inhibits most of the angiogenic properties of angiostatin. Interacts with BLOC1S1. Interacts with BCL2L1 isoform BCL-X(L); the interaction mediates the association of BCL2L1 isoform BCL-X(L) with the mitochondrial membrane F(1)F(0) ATP synthase and enhances neurons metabolic efficiency. Interacts with CLN5 and PPT1. Interacts with S100A1; this interaction increases F1-ATPase activity. Interacts with ABCB7; this interaction allows the regulation of cellular iron homeostasis and cellular reactive oxygen species (ROS) levels in cardiomyocytes. Acetylated on lysine residues. BLOC1S1 is required for acetylation. Expressed in heart (at protein level).

It localises to the mitochondrion. The protein localises to the mitochondrion inner membrane. The protein resides in the cell membrane. In terms of biological role, subunit alpha, of the mitochondrial membrane ATP synthase complex (F(1)F(0) ATP synthase or Complex V) that produces ATP from ADP in the presence of a proton gradient across the membrane which is generated by electron transport complexes of the respiratory chain. ATP synthase complex consist of a soluble F(1) head domain - the catalytic core - and a membrane F(1) domain - the membrane proton channel. These two domains are linked by a central stalk rotating inside the F(1) region and a stationary peripheral stalk. During catalysis, ATP synthesis in the catalytic domain of F(1) is coupled via a rotary mechanism of the central stalk subunits to proton translocation. In vivo, can only synthesize ATP although its ATP hydrolase activity can be activated artificially in vitro. With the catalytic subunit beta (ATP5F1B), forms the catalytic core in the F(1) domain. Subunit alpha does not bear the catalytic high-affinity ATP-binding sites. In Sus scrofa (Pig), this protein is ATP synthase F(1) complex subunit alpha, mitochondrial.